The sequence spans 516 residues: MKALHLTGNTLTLDEVREVVYEQRPVLLDSDARAAVDRARAVIEDVVANDRLAYAVTTGVGKLSDVRIPPAENRTLQLNLMRSHAVGVGDPLSEQVSRAMMLLRANSLCKGWSGVRGLVIDTLCEMLNRGVHPVIPSQGSVGASGDLAPLAHQGLVLIGEGEAFYQGKRVSGAEALRAAGIKPITLEAKETISLINGTQAMLAVGLLAVLDAEILAETADAVGALALDVLQGTDAAFDERIHKARPHSGQIQVAANLRRLLAGSQIHESHKDCARVQDAYSLRCMPQVHGAVRDTIHYCRSVFEVEMNSAVDNPLVFPEPKKVGERSDAPVHGDIISGGNFHGEPVAFALDFLAIALSALAGISERRIERLVNPALSEGLPAFLAPGAGLNSGFMMPQVTAAALVSENKVLSHPASVDSITTSGNKEDFVSMGMTAALKLQRIVQNTRNVMAIEALAAAQALDFKAPLKTTKLLQKVHAAVRAVSPQITEDRILTADFAAAEALIRSGKLAAAARN.

The 5-imidazolinone (Ala-Gly) cross-link spans 143 to 145 (ASG). Position 144 is a 2,3-didehydroalanine (Ser) (serine 144).

This sequence belongs to the PAL/histidase family. Contains an active site 4-methylidene-imidazol-5-one (MIO), which is formed autocatalytically by cyclization and dehydration of residues Ala-Ser-Gly.

Its subcellular location is the cytoplasm. It catalyses the reaction L-histidine = trans-urocanate + NH4(+). The protein operates within amino-acid degradation; L-histidine degradation into L-glutamate; N-formimidoyl-L-glutamate from L-histidine: step 1/3. The polypeptide is Histidine ammonia-lyase (Koribacter versatilis (strain Ellin345)).